Here is a 129-residue protein sequence, read N- to C-terminus: uncharacterized protein (129 aa).

The first 27 residues, 1–27, serve as a signal peptide directing secretion; sequence MLMRKKKLLSRISFGSLFLLCGTILSA. Cys-28 carries N-palmitoyl cysteine lipidation. Residue Cys-28 is the site of S-diacylglycerol cysteine attachment.

It belongs to the MG439/MG440 family.

It is found in the cell membrane. This is an uncharacterized protein from Mycoplasma pneumoniae (strain ATCC 29342 / M129 / Subtype 1) (Mycoplasmoides pneumoniae).